A 245-amino-acid polypeptide reads, in one-letter code: E3 ubiquitin-protein ligase RNF138 (245 aa).

The residue at position 2 (Ala2) is an N-acetylalanine. An RING-type zinc finger spans residues 18–58 (CPVCQEVLKTPVRTAACQHVFCRKCFLTAMRESGIHCPLCR). Zn(2+)-binding residues include Cys86, Cys89, His101, and Cys105. Residues 86 to 105 (CRCCAKQIKFYRMRHHYKSC) form a C2HC RNF-type zinc finger. The interval 128–153 (VGNSNRSETSASDNIETYQENTGSSG) is disordered. C2H2-type zinc fingers lie at residues 157–180 (FKCP…NSNH) and 187–215 (VTCP…NQRH). The UIM domain maps to 225 to 243 (LQLDEETQYQTAVEESFQV).

In terms of assembly, interacts with NLK. Interacts with XRCC5/Ku80. Interacts with RBBP8/CtIP. In terms of processing, auto-ubiquitinated.

It localises to the chromosome. The catalysed reaction is S-ubiquitinyl-[E2 ubiquitin-conjugating enzyme]-L-cysteine + [acceptor protein]-L-lysine = [E2 ubiquitin-conjugating enzyme]-L-cysteine + N(6)-ubiquitinyl-[acceptor protein]-L-lysine.. It participates in protein modification; protein ubiquitination. Its function is as follows. E3 ubiquitin-protein ligase involved in DNA damage response by promoting DNA resection and homologous recombination. Recruited to sites of double-strand breaks following DNA damage and specifically promotes double-strand break repair via homologous recombination. Two different, non-exclusive, mechanisms have been proposed. According to a report, regulates the choice of double-strand break repair by favoring homologous recombination over non-homologous end joining (NHEJ): acts by mediating ubiquitination of XRCC5/Ku80, leading to remove the Ku complex from DNA breaks, thereby promoting homologous recombination. According to another report, cooperates with UBE2Ds E2 ubiquitin ligases (UBE2D1, UBE2D2, UBE2D3 or UBE2D4) to promote homologous recombination by mediating ubiquitination of RBBP8/CtIP. Together with NLK, involved in the ubiquitination and degradation of TCF/LEF. Also exhibits auto-ubiquitination activity in combination with UBE2K. May act as a negative regulator in the Wnt/beta-catenin-mediated signaling pathway. This is E3 ubiquitin-protein ligase RNF138 (RNF138) from Bos taurus (Bovine).